Here is a 383-residue protein sequence, read N- to C-terminus: Dimethylsulfoniopropionate lyase 3 (383 aa).

Belongs to the aspartate/glutamate racemases family. ALMA1 subfamily. In terms of assembly, homotetramer.

It catalyses the reaction S,S-dimethyl-beta-propiothetin = acrylate + dimethyl sulfide + H(+). In terms of biological role, mediates cleavage of dimethylsulfoniopropionate (DMSP) into dimethyl sulfide (DMS) and acrylate. DMS is the principal form by which sulfur is transported from oceans to the atmosphere and is a key component of the ocean sulfur cycle. In Emiliania huxleyi (strain CCMP1516), this protein is Dimethylsulfoniopropionate lyase 3.